Reading from the N-terminus, the 119-residue chain is Large ribosomal subunit protein bL20 (119 aa).

The protein belongs to the bacterial ribosomal protein bL20 family.

Binds directly to 23S ribosomal RNA and is necessary for the in vitro assembly process of the 50S ribosomal subunit. It is not involved in the protein synthesizing functions of that subunit. The polypeptide is Large ribosomal subunit protein bL20 (Rhodopseudomonas palustris (strain HaA2)).